A 127-amino-acid polypeptide reads, in one-letter code: Large ribosomal subunit protein bL12 (127 aa).

It belongs to the bacterial ribosomal protein bL12 family. Homodimer. Part of the ribosomal stalk of the 50S ribosomal subunit. Forms a multimeric L10(L12)X complex, where L10 forms an elongated spine to which 2 to 4 L12 dimers bind in a sequential fashion. Binds GTP-bound translation factors.

Its function is as follows. Forms part of the ribosomal stalk which helps the ribosome interact with GTP-bound translation factors. Is thus essential for accurate translation. The protein is Large ribosomal subunit protein bL12 of Syntrophobacter fumaroxidans (strain DSM 10017 / MPOB).